The following is a 429-amino-acid chain: Serine hydroxymethyltransferase (429 aa).

(6S)-5,6,7,8-tetrahydrofolate is bound by residues Leu125 and 129–131 (GHL). N6-(pyridoxal phosphate)lysine is present on Lys234.

Belongs to the SHMT family. As to quaternary structure, homodimer. Requires pyridoxal 5'-phosphate as cofactor.

Its subcellular location is the cytoplasm. It carries out the reaction (6R)-5,10-methylene-5,6,7,8-tetrahydrofolate + glycine + H2O = (6S)-5,6,7,8-tetrahydrofolate + L-serine. It functions in the pathway one-carbon metabolism; tetrahydrofolate interconversion. It participates in amino-acid biosynthesis; glycine biosynthesis; glycine from L-serine: step 1/1. Functionally, catalyzes the reversible interconversion of serine and glycine with tetrahydrofolate (THF) serving as the one-carbon carrier. This reaction serves as the major source of one-carbon groups required for the biosynthesis of purines, thymidylate, methionine, and other important biomolecules. Also exhibits THF-independent aldolase activity toward beta-hydroxyamino acids, producing glycine and aldehydes, via a retro-aldol mechanism. The protein is Serine hydroxymethyltransferase of Allorhizobium ampelinum (strain ATCC BAA-846 / DSM 112012 / S4) (Agrobacterium vitis (strain S4)).